The primary structure comprises 364 residues: tRNA 2-selenouridine synthase (364 aa).

The region spanning 14–137 (LIADTPIIDV…LRQTAIQATI (124 aa)) is the Rhodanese domain. The active-site S-selanylcysteine intermediate is cysteine 97.

This sequence belongs to the SelU family. In terms of assembly, monomer.

The catalysed reaction is 5-methylaminomethyl-2-thiouridine(34) in tRNA + selenophosphate + (2E)-geranyl diphosphate + H2O + H(+) = 5-methylaminomethyl-2-selenouridine(34) in tRNA + (2E)-thiogeraniol + phosphate + diphosphate. It catalyses the reaction 5-methylaminomethyl-2-thiouridine(34) in tRNA + (2E)-geranyl diphosphate = 5-methylaminomethyl-S-(2E)-geranyl-thiouridine(34) in tRNA + diphosphate. The enzyme catalyses 5-methylaminomethyl-S-(2E)-geranyl-thiouridine(34) in tRNA + selenophosphate + H(+) = 5-methylaminomethyl-2-(Se-phospho)selenouridine(34) in tRNA + (2E)-thiogeraniol. It carries out the reaction 5-methylaminomethyl-2-(Se-phospho)selenouridine(34) in tRNA + H2O = 5-methylaminomethyl-2-selenouridine(34) in tRNA + phosphate. In terms of biological role, involved in the post-transcriptional modification of the uridine at the wobble position (U34) of tRNA(Lys), tRNA(Glu) and tRNA(Gln). Catalyzes the conversion of 2-thiouridine (S2U-RNA) to 2-selenouridine (Se2U-RNA). Acts in a two-step process involving geranylation of 2-thiouridine (S2U) to S-geranyl-2-thiouridine (geS2U) and subsequent selenation of the latter derivative to 2-selenouridine (Se2U) in the tRNA chain. This Escherichia coli (strain SMS-3-5 / SECEC) protein is tRNA 2-selenouridine synthase.